The following is a 429-amino-acid chain: Glutamate-1-semialdehyde 2,1-aminomutase (429 aa).

Lys267 carries the N6-(pyridoxal phosphate)lysine modification.

The protein belongs to the class-III pyridoxal-phosphate-dependent aminotransferase family. HemL subfamily. In terms of assembly, homodimer. Pyridoxal 5'-phosphate serves as cofactor.

The protein localises to the cytoplasm. It carries out the reaction (S)-4-amino-5-oxopentanoate = 5-aminolevulinate. Its pathway is porphyrin-containing compound metabolism; protoporphyrin-IX biosynthesis; 5-aminolevulinate from L-glutamyl-tRNA(Glu): step 2/2. This chain is Glutamate-1-semialdehyde 2,1-aminomutase, found in Xanthomonas oryzae pv. oryzae (strain PXO99A).